The primary structure comprises 887 residues: Pyruvate dehydrogenase E1 component (887 aa).

In terms of assembly, homodimer. Part of the PDH complex, consisting of multiple copies of pyruvate dehydrogenase (E1), dihydrolipoamide acetyltransferase (E2) and lipoamide dehydrogenase (E3). Requires thiamine diphosphate as cofactor.

It carries out the reaction N(6)-[(R)-lipoyl]-L-lysyl-[protein] + pyruvate + H(+) = N(6)-[(R)-S(8)-acetyldihydrolipoyl]-L-lysyl-[protein] + CO2. In terms of biological role, component of the pyruvate dehydrogenase (PDH) complex, that catalyzes the overall conversion of pyruvate to acetyl-CoA and CO(2). The polypeptide is Pyruvate dehydrogenase E1 component (aceE) (Buchnera aphidicola subsp. Baizongia pistaciae (strain Bp)).